Consider the following 284-residue polypeptide: Alpha-S1-casein (284 aa).

The first 15 residues, 1–15 (MKLLILTCLVAAALA), serve as a signal peptide directing secretion. 2 disordered regions span residues 21–44 (RRNA…IVKQ) and 78–111 (SSAE…SATE). Composition is skewed to low complexity over residues 24-36 (AVSS…NSSS) and 78-99 (SSAE…SSSS). 8 positions are modified to phosphoserine: serine 79, serine 93, serine 94, serine 95, serine 96, serine 97, serine 98, and serine 99. Tandem repeats lie at residues 138–143 (LLQQAS), 144–149 (LAQQAS), 150–155 (LAQQAS), 156–161 (LAQQAL), 162–167 (LAQQPS), 168–173 (LAQQAA), 174–179 (LAQQAS), 180–185 (LAQQAS), 186–191 (LAQQAS), and 192–197 (LAQKHH). The segment at 138–197 (LLQQASLAQQASLAQQASLAQQALLAQQPSLAQQAALAQQASLAQQASLAQQASLAQKHH) is 10 X 6 AA tandem repeats.

The protein belongs to the alpha-casein family. Mammary gland specific. Secreted in milk.

It is found in the secreted. Functionally, important role in the capacity of milk to transport calcium phosphate. This Rattus norvegicus (Rat) protein is Alpha-S1-casein (Csn1s1).